Consider the following 219-residue polypeptide: MKALTLALFLALSLYLLPNPAHSRFNPIRLPTTHEPASSETPVLDINGDEVRAGGNYYMVYAILGACGGGLRLAHLDLMNNCASDVIVSPNDLDNGDLITITPATVDPEATVVMTSTYQTFRFNIATNKLCVNNVNWGIQYDSASGQSLLKAGEFVSDNSNQFKIEVVDANLNFYKLTYCLFGSDKCYNVGRFKDPMLRTTRLALSYYPFFFVIKPTVV.

A signal peptide spans 1 to 23 (MKALTLALFLALSLYLLPNPAHS).

This sequence belongs to the protease inhibitor I3 (leguminous Kunitz-type inhibitor) family. As to expression, accumulates specifically in tuberous roots and tubers upon tuberization. Sporamin accounts 60 to 80% of the total soluble protein of the organ.

Its subcellular location is the vacuole. Major tuberous root protein. This Ipomoea batatas (Sweet potato) protein is Sporamin A (GSPO-A1).